Reading from the N-terminus, the 133-residue chain is Transcription antitermination protein NusB (133 aa).

It belongs to the NusB family.

Its function is as follows. Involved in transcription antitermination. Required for transcription of ribosomal RNA (rRNA) genes. Binds specifically to the boxA antiterminator sequence of the ribosomal RNA (rrn) operons. This chain is Transcription antitermination protein NusB, found in Pediococcus pentosaceus (strain ATCC 25745 / CCUG 21536 / LMG 10740 / 183-1w).